We begin with the raw amino-acid sequence, 143 residues long: Nucleoside diphosphate kinase (143 aa).

Residues K11, F59, R87, T93, R104, and N114 each coordinate ATP. H117 serves as the catalytic Pros-phosphohistidine intermediate.

This sequence belongs to the NDK family. In terms of assembly, homotetramer. The cofactor is Mg(2+).

It is found in the cytoplasm. The enzyme catalyses a 2'-deoxyribonucleoside 5'-diphosphate + ATP = a 2'-deoxyribonucleoside 5'-triphosphate + ADP. The catalysed reaction is a ribonucleoside 5'-diphosphate + ATP = a ribonucleoside 5'-triphosphate + ADP. Its function is as follows. Major role in the synthesis of nucleoside triphosphates other than ATP. The ATP gamma phosphate is transferred to the NDP beta phosphate via a ping-pong mechanism, using a phosphorylated active-site intermediate. The protein is Nucleoside diphosphate kinase of Thioalkalivibrio sulfidiphilus (strain HL-EbGR7).